A 424-amino-acid polypeptide reads, in one-letter code: Probable serine/threonine-protein kinase PBL6 (424 aa).

Positions methionine 1 to proline 26 are disordered. A lipid anchor (N-myristoyl glycine) is attached at glycine 2. Cysteine 3 carries S-palmitoyl cysteine lipidation. Phosphothreonine is present on threonine 87. The 280-residue stretch at phenylalanine 98 to serine 377 folds into the Protein kinase domain. ATP-binding positions include leucine 104–valine 112 and lysine 127. The residue at position 172 (tyrosine 172) is a Phosphotyrosine. The active-site Proton acceptor is the aspartate 225. Residues serine 229 and serine 259 each carry the phosphoserine modification. Phosphothreonine occurs at positions 260 and 265. At tyrosine 273 the chain carries Phosphotyrosine.

Belongs to the protein kinase superfamily. Ser/Thr protein kinase family.

Its subcellular location is the cell membrane. The catalysed reaction is L-seryl-[protein] + ATP = O-phospho-L-seryl-[protein] + ADP + H(+). It catalyses the reaction L-threonyl-[protein] + ATP = O-phospho-L-threonyl-[protein] + ADP + H(+). In terms of biological role, may be involved in plant defense signaling. The polypeptide is Probable serine/threonine-protein kinase PBL6 (Arabidopsis thaliana (Mouse-ear cress)).